The chain runs to 48 residues: uncharacterized protein (48 aa).

Residues 1-30 (MLGRTKLGNRNAQANNNAKKKNGFQTHFDS) are disordered.

This is an uncharacterized protein from Bacillus subtilis (strain 168).